Reading from the N-terminus, the 496-residue chain is MTAAHPVAQLTAEAYPKVKRNPNFKVLDSEDLAYFRSILSNDEILNSQAPEELASFNQDWMKKYRGQSNLILLPNSTDKVSKIMKYCNDKKLAVVPQGGNTDLVGASVPVFDEIVLSLRNMNKVRDFDPVSGTFKCDAGVVMRDAHQFLHDHDHIFPLDLPSRNNCQVGGVVSTNAGGLNFLRYGSLHGNVLGLEVVLPNGEIISNINALRKDNTGYDLKQLFIGAEGTIGVVTGVSIVAAAKPKALNAVFFGIENFDTVQKLFVKAKSELSEILSAFEFMDRGSIECTIEYLKDLPFPLENQHNFYVLIETSGSNKRHDDEKLTAFLKDTTDSKLISEGMMAKDKADFDRLWTWRKSVPTACNSYGGMYKYDMSLQLKDLYSVSAAVTERLNAAGLIGDAPKPVVKSCGYGHVGDGNIHLNIAVREFTKQIEDLLEPFVYEYIASKKGSISAEHGIGFHKKGKLHYTRSDIEIRFMKDIKNHYDPNGILNPYKYI.

Residue Lys-17 forms a Glycyl lysine isopeptide (Lys-Gly) (interchain with G-Cter in ubiquitin) linkage. The 180-residue stretch at 64 to 243 (YRGQSNLILL…TGVSIVAAAK (180 aa)) folds into the FAD-binding PCMH-type domain.

It belongs to the FAD-binding oxidoreductase/transferase type 4 family. FAD is required as a cofactor.

The protein resides in the cytoplasm. The catalysed reaction is (R)-lactate + 2 Fe(III)-[cytochrome c] = 2 Fe(II)-[cytochrome c] + pyruvate + 2 H(+). It catalyses the reaction (R)-2-hydroxyglutarate + pyruvate = (R)-lactate + 2-oxoglutarate. In terms of biological role, catalyzes the reversible oxidation of (R)-2-hydroxyglutarate to 2-oxoglutarate coupled to reduction of pyruvate to (R)-lactate. Can also use oxaloacetate as electron acceptor instead of pyruvate producing (R)-malate. The chain is D-2-hydroxyglutarate--pyruvate transhydrogenase DLD3 (DLD3) from Saccharomyces cerevisiae (strain ATCC 204508 / S288c) (Baker's yeast).